The following is a 402-amino-acid chain: NADH-quinone oxidoreductase subunit D (402 aa).

This sequence belongs to the complex I 49 kDa subunit family. NDH-1 is composed of 14 different subunits. Subunits NuoB, C, D, E, F, and G constitute the peripheral sector of the complex.

It localises to the cell inner membrane. It carries out the reaction a quinone + NADH + 5 H(+)(in) = a quinol + NAD(+) + 4 H(+)(out). Its function is as follows. NDH-1 shuttles electrons from NADH, via FMN and iron-sulfur (Fe-S) centers, to quinones in the respiratory chain. The immediate electron acceptor for the enzyme in this species is believed to be ubiquinone. Couples the redox reaction to proton translocation (for every two electrons transferred, four hydrogen ions are translocated across the cytoplasmic membrane), and thus conserves the redox energy in a proton gradient. The protein is NADH-quinone oxidoreductase subunit D of Azorhizobium caulinodans (strain ATCC 43989 / DSM 5975 / JCM 20966 / LMG 6465 / NBRC 14845 / NCIMB 13405 / ORS 571).